Reading from the N-terminus, the 1033-residue chain is Isoleucine--tRNA ligase (1033 aa).

Positions 47–57 match the 'HIGH' region motif; sequence PTANGLPHVGH. The short motif at 590-594 is the 'KMSKS' region element; that stretch reads KMSKS. Lysine 593 lines the ATP pocket.

The protein belongs to the class-I aminoacyl-tRNA synthetase family. IleS type 2 subfamily. As to quaternary structure, monomer. Zn(2+) serves as cofactor.

The protein localises to the cytoplasm. It catalyses the reaction tRNA(Ile) + L-isoleucine + ATP = L-isoleucyl-tRNA(Ile) + AMP + diphosphate. Catalyzes the attachment of isoleucine to tRNA(Ile). As IleRS can inadvertently accommodate and process structurally similar amino acids such as valine, to avoid such errors it has two additional distinct tRNA(Ile)-dependent editing activities. One activity is designated as 'pretransfer' editing and involves the hydrolysis of activated Val-AMP. The other activity is designated 'posttransfer' editing and involves deacylation of mischarged Val-tRNA(Ile). In Bacillus thuringiensis (strain Al Hakam), this protein is Isoleucine--tRNA ligase.